We begin with the raw amino-acid sequence, 217 residues long: Small ribosomal subunit protein uS3 (217 aa).

Residues 38–106 enclose the KH type-2 domain; it reads IRKFIQKELA…QVHINIIEIK (69 aa).

Belongs to the universal ribosomal protein uS3 family. In terms of assembly, part of the 30S ribosomal subunit. Forms a tight complex with proteins S10 and S14.

Binds the lower part of the 30S subunit head. Binds mRNA in the 70S ribosome, positioning it for translation. In Streptococcus uberis (strain ATCC BAA-854 / 0140J), this protein is Small ribosomal subunit protein uS3.